A 318-amino-acid polypeptide reads, in one-letter code: Aspartate carbamoyltransferase catalytic subunit (318 aa).

Carbamoyl phosphate contacts are provided by Arg62 and Thr63. L-aspartate is bound at residue Lys90. Carbamoyl phosphate contacts are provided by Arg112, His140, and Gln143. 2 residues coordinate L-aspartate: Arg173 and Arg227. 2 residues coordinate carbamoyl phosphate: Gly268 and Pro269.

It belongs to the aspartate/ornithine carbamoyltransferase superfamily. ATCase family. In terms of assembly, heterododecamer (2C3:3R2) of six catalytic PyrB chains organized as two trimers (C3), and six regulatory PyrI chains organized as three dimers (R2).

The catalysed reaction is carbamoyl phosphate + L-aspartate = N-carbamoyl-L-aspartate + phosphate + H(+). The protein operates within pyrimidine metabolism; UMP biosynthesis via de novo pathway; (S)-dihydroorotate from bicarbonate: step 2/3. Functionally, catalyzes the condensation of carbamoyl phosphate and aspartate to form carbamoyl aspartate and inorganic phosphate, the committed step in the de novo pyrimidine nucleotide biosynthesis pathway. This chain is Aspartate carbamoyltransferase catalytic subunit, found in Desulfotalea psychrophila (strain LSv54 / DSM 12343).